A 164-amino-acid chain; its full sequence is Protein-export protein SecB (164 aa).

It belongs to the SecB family. As to quaternary structure, homotetramer, a dimer of dimers. One homotetramer interacts with 1 SecA dimer.

It localises to the cytoplasm. Its function is as follows. One of the proteins required for the normal export of preproteins out of the cell cytoplasm. It is a molecular chaperone that binds to a subset of precursor proteins, maintaining them in a translocation-competent state. It also specifically binds to its receptor SecA. The protein is Protein-export protein SecB of Pseudomonas syringae pv. tomato (strain ATCC BAA-871 / DC3000).